Consider the following 506-residue polypeptide: Galactose/methyl galactoside import ATP-binding protein MglA (506 aa).

ABC transporter domains lie at 14–249 (LEMS…VGRS) and 264–506 (VILE…SLHL). 46-53 (GENGAGKS) lines the ATP pocket.

Belongs to the ABC transporter superfamily. Galactose/methyl galactoside importer (TC 3.A.1.2.3) family. As to quaternary structure, the complex is composed of one ATP-binding protein (MglA), two transmembrane proteins (MglC) and a solute-binding protein (MglB).

The protein resides in the cell inner membrane. It catalyses the reaction D-galactose(out) + ATP + H2O = D-galactose(in) + ADP + phosphate + H(+). The enzyme catalyses methyl beta-D-galactoside(out) + ATP + H2O = methyl beta-D-galactoside(in) + ADP + phosphate + H(+). Its function is as follows. Part of the ABC transporter complex MglABC involved in galactose/methyl galactoside import. Responsible for energy coupling to the transport system. This is Galactose/methyl galactoside import ATP-binding protein MglA from Escherichia coli O6:K15:H31 (strain 536 / UPEC).